A 249-amino-acid chain; its full sequence is Small ribosomal subunit protein uS2 (249 aa).

Belongs to the universal ribosomal protein uS2 family.

This is Small ribosomal subunit protein uS2 from Acinetobacter baylyi (strain ATCC 33305 / BD413 / ADP1).